The chain runs to 101 residues: NAD(P)H-quinone oxidoreductase subunit 4L, chloroplastic (101 aa).

3 helical membrane passes run 2–22 (MFEY…YGLI), 32–52 (MCLE…SDLF), and 61–81 (IFSI…PAIV).

It belongs to the complex I subunit 4L family. In terms of assembly, NDH is composed of at least 16 different subunits, 5 of which are encoded in the nucleus.

It localises to the plastid. The protein localises to the chloroplast thylakoid membrane. It catalyses the reaction a plastoquinone + NADH + (n+1) H(+)(in) = a plastoquinol + NAD(+) + n H(+)(out). It carries out the reaction a plastoquinone + NADPH + (n+1) H(+)(in) = a plastoquinol + NADP(+) + n H(+)(out). Its function is as follows. NDH shuttles electrons from NAD(P)H:plastoquinone, via FMN and iron-sulfur (Fe-S) centers, to quinones in the photosynthetic chain and possibly in a chloroplast respiratory chain. The immediate electron acceptor for the enzyme in this species is believed to be plastoquinone. Couples the redox reaction to proton translocation, and thus conserves the redox energy in a proton gradient. This chain is NAD(P)H-quinone oxidoreductase subunit 4L, chloroplastic, found in Amborella trichopoda.